The chain runs to 375 residues: Aminomethyltransferase (375 aa).

Belongs to the GcvT family. The glycine cleavage system is composed of four proteins: P, T, L and H.

The catalysed reaction is N(6)-[(R)-S(8)-aminomethyldihydrolipoyl]-L-lysyl-[protein] + (6S)-5,6,7,8-tetrahydrofolate = N(6)-[(R)-dihydrolipoyl]-L-lysyl-[protein] + (6R)-5,10-methylene-5,6,7,8-tetrahydrofolate + NH4(+). Its function is as follows. The glycine cleavage system catalyzes the degradation of glycine. The sequence is that of Aminomethyltransferase from Cupriavidus pinatubonensis (strain JMP 134 / LMG 1197) (Cupriavidus necator (strain JMP 134)).